The chain runs to 239 residues: Regulator of G-protein signaling 20 (239 aa).

Positions 1–29 (MRTANGGPRARASPSASPADPGLPEGSER) are disordered. The span at 8–19 (PRARASPSASPA) shows a compositional bias: low complexity. Residues 113-229 (SFDNLMVTPA…MNSTVYKDLL (117 aa)) enclose the RGS domain.

As to quaternary structure, forms a complex with G(alpha)z/i2 subunits and mu-opioid receptors; the formation of this complex results in mu-opioid receptor desensitization. Interacts with OPRM1. In terms of processing, fatty acylated. Heavily palmitoylated in the cysteine string motif. N- and O-glycosylated in synapsomal membranes. Post-translationally, serine phosphorylated in synapsomal membranes. In terms of processing, sumoylated with SUMO1, SUMO2 and SUMO3. Sumoylation increases binding to the G-proteins, G(alpha)-i2 and G(z), and interaction with mu-opioid receptors.

The protein resides in the membrane. It localises to the nucleus. The protein localises to the cytoplasm. In terms of biological role, inhibits signal transduction by increasing the GTPase activity of G protein alpha subunits thereby driving them into their inactive GDP-bound form. Binds selectively to G(z)-alpha and G(alpha)-i2 subunits, accelerates their GTPase activity and regulates their signaling activities. The G(z)-alpha activity is inhibited by the phosphorylation and palmitoylation of the G-protein. Negatively regulates mu-opioid receptor-mediated activation of the G-proteins. In Mus musculus (Mouse), this protein is Regulator of G-protein signaling 20 (Rgs20).